The sequence spans 328 residues: Tetraacyldisaccharide 4'-kinase (328 aa).

Residue 55–62 (TAGGNGKT) coordinates ATP.

The protein belongs to the LpxK family.

It carries out the reaction a lipid A disaccharide + ATP = a lipid IVA + ADP + H(+). It functions in the pathway glycolipid biosynthesis; lipid IV(A) biosynthesis; lipid IV(A) from (3R)-3-hydroxytetradecanoyl-[acyl-carrier-protein] and UDP-N-acetyl-alpha-D-glucosamine: step 6/6. Transfers the gamma-phosphate of ATP to the 4'-position of a tetraacyldisaccharide 1-phosphate intermediate (termed DS-1-P) to form tetraacyldisaccharide 1,4'-bis-phosphate (lipid IVA). This is Tetraacyldisaccharide 4'-kinase from Yersinia enterocolitica serotype O:8 / biotype 1B (strain NCTC 13174 / 8081).